Reading from the N-terminus, the 156-residue chain is Small ribosomal subunit protein uS7 (156 aa).

It belongs to the universal ribosomal protein uS7 family. As to quaternary structure, part of the 30S ribosomal subunit. Contacts proteins S9 and S11.

Its function is as follows. One of the primary rRNA binding proteins, it binds directly to 16S rRNA where it nucleates assembly of the head domain of the 30S subunit. Is located at the subunit interface close to the decoding center, probably blocks exit of the E-site tRNA. The polypeptide is Small ribosomal subunit protein uS7 (Deinococcus geothermalis (strain DSM 11300 / CIP 105573 / AG-3a)).